A 210-amino-acid chain; its full sequence is Glutathione S-transferase P (210 aa).

One can recognise a GST N-terminal domain in the interval 2 to 81; sequence ASYTIVYFPV…HLGRTLGLYG (80 aa). Phosphotyrosine; by EGFR is present on Tyr-4. Residues Tyr-8, Arg-14, Trp-39, Lys-45, and 52-53 each bind glutathione; that span reads QL. Position 62 is a phosphothreonine (Thr-62). 65-66 provides a ligand contact to glutathione; sequence QS. Positions 83–204 constitute a GST C-terminal domain; sequence DQREAALVDM…ASPEHVNRPI (122 aa). Residues Lys-103 and Lys-116 each carry the N6-succinyllysine modification. At Lys-128 the chain carries N6-acetyllysine.

The protein belongs to the GST superfamily. Pi family. Homodimer. Interacts with CDK5.

The protein localises to the cytoplasm. It localises to the mitochondrion. It is found in the nucleus. It carries out the reaction RX + glutathione = an S-substituted glutathione + a halide anion + H(+). The catalysed reaction is prostaglandin J2 + glutathione = prostaglandin J2-S-(R)-glutathione. The enzyme catalyses prostaglandin J2 + glutathione = prostaglandin J2-S-(S)-glutathione. It catalyses the reaction prostaglandin A2 + glutathione = prostaglandin A2-S-(S)-glutathione. It carries out the reaction 11(S)-hydroxy-14(S),15(S)-epoxy-(5Z,8Z,12E)-eicosatrienoate + glutathione = (11S,15S)-dihydroxy-14(R)-S-glutathionyl-(5Z,8Z,12E)-eicosatrienoate. Its function is as follows. Conjugation of reduced glutathione to a wide number of exogenous and endogenous hydrophobic electrophiles. Involved in the formation of glutathione conjugates of both prostaglandin A2 (PGA2) and prostaglandin J2 (PGJ2). Participates in the formation of novel hepoxilin regioisomers. Negatively regulates CDK5 activity via p25/p35 translocation to prevent neurodegeneration. The sequence is that of Glutathione S-transferase P (GSTP1) from Capra hircus (Goat).